A 131-amino-acid chain; its full sequence is Profilin-8 (131 aa).

A disulfide bond links C13 and C115. The short motif at 81–97 (AVIRGKKGAGGITIKKT) is the Involved in PIP2 interaction element. Residue T111 is modified to Phosphothreonine.

The protein belongs to the profilin family. Occurs in many kinds of cells as a complex with monomeric actin in a 1:1 ratio. Phosphorylated by MAP kinases.

It localises to the cytoplasm. Its subcellular location is the cytoskeleton. Functionally, binds to actin and affects the structure of the cytoskeleton. At high concentrations, profilin prevents the polymerization of actin, whereas it enhances it at low concentrations. The polypeptide is Profilin-8 (Phleum pratense (Common timothy)).